Here is a 96-residue protein sequence, read N- to C-terminus: Co-chaperonin GroES 2 (96 aa).

It belongs to the GroES chaperonin family. Heptamer of 7 subunits arranged in a ring. Interacts with the chaperonin GroEL.

The protein resides in the cytoplasm. Functionally, together with the chaperonin GroEL, plays an essential role in assisting protein folding. The GroEL-GroES system forms a nano-cage that allows encapsulation of the non-native substrate proteins and provides a physical environment optimized to promote and accelerate protein folding. GroES binds to the apical surface of the GroEL ring, thereby capping the opening of the GroEL channel. The polypeptide is Co-chaperonin GroES 2 (Vibrio vulnificus (strain CMCP6)).